Here is a 64-residue protein sequence, read N- to C-terminus: Long neurotoxin MS4 (64 aa).

Disulfide bonds link Cys-3–Cys-24, Cys-6–Cys-11, Cys-17–Cys-41, Cys-45–Cys-57, and Cys-58–Cys-63.

This sequence belongs to the three-finger toxin family. Ancestral subfamily. In terms of tissue distribution, expressed by the venom gland.

The protein localises to the secreted. Its function is as follows. Produces peripheral paralysis by blocking neuromuscular transmission at the postsynaptic site. Weak inhibitor of the endogenous nicotinic acetylcholine receptors (nAChR) in the human rhabdomyosarcoma TE 671 cell line with an IC(50) of 690 mM. This neurotoxin is lethal to zebrafish by injection at the back of the dorsolateral region, but is not toxic to mice by intraperitoneal injection. The polypeptide is Long neurotoxin MS4 (Micrurus surinamensis (Surinam coral snake)).